We begin with the raw amino-acid sequence, 85 residues long: Small ribosomal subunit protein eS27 (85 aa).

The C4-type zinc-finger motif lies at 38-60 (CHGCRTITTVFSHAQNVVICSSC).

Belongs to the eukaryotic ribosomal protein eS27 family. The cofactor is Zn(2+).

The chain is Small ribosomal subunit protein eS27 (rps27) from Dictyostelium discoideum (Social amoeba).